The sequence spans 1087 residues: Exportin-7 (1087 aa).

The residue at position 2 (A2) is an N-acetylalanine. The 67-residue stretch at 30–96 (AEKALVEFTN…RNYVLNYLAT (67 aa)) folds into the Importin N-terminal domain. S570 is subject to Phosphoserine.

This sequence belongs to the exportin family. In terms of assembly, binds to nucleoporins. Found in a complex with XPO7, EIF4A1, ARHGAP1, VPS26A, VPS29, VPS35 and SFN. Interacts with ARHGAP1 and SFN. Interacts with Ran and cargo proteins in a GTP-dependent manner.

The protein resides in the cytoplasm. It is found in the nucleus. Its subcellular location is the nuclear pore complex. Functionally, mediates the nuclear export of proteins (cargos) with broad substrate specificity. In the nucleus binds cooperatively to its cargo and to the GTPase Ran in its active GTP-bound form. Docking of this trimeric complex to the nuclear pore complex (NPC) is mediated through binding to nucleoporins. Upon transit of a nuclear export complex into the cytoplasm, disassembling of the complex and hydrolysis of Ran-GTP to Ran-GDP (induced by RANBP1 and RANGAP1, respectively) cause release of the cargo from the export receptor. XPO7 then return to the nuclear compartment and mediate another round of transport. The directionality of nuclear export is thought to be conferred by an asymmetric distribution of the GTP- and GDP-bound forms of Ran between the cytoplasm and nucleus. The polypeptide is Exportin-7 (XPO7) (Pongo abelii (Sumatran orangutan)).